The following is a 283-amino-acid chain: 1-deoxypentalenic acid 11-beta-hydroxylase (283 aa).

R117 contributes to the substrate binding site. 2 residues coordinate Fe cation: H135 and D137. Residues 135–137 (HQD) and W151 each bind 2-oxoglutarate. R186 is a binding site for substrate. H224 lines the Fe cation pocket. 2-oxoglutarate-binding residues include S226 and R238. The disordered stretch occupies residues 260 to 283 (WPESAKDASKGILSKITGTPTTAE).

This sequence belongs to the PhyH family. Requires Fe cation as cofactor. The cofactor is L-ascorbate.

The enzyme catalyses 1-deoxypentalenate + 2-oxoglutarate + O2 = 1-deoxy-11beta-hydroxypentalenate + succinate + CO2. It functions in the pathway antibiotic biosynthesis; pentalenolactone biosynthesis. In terms of biological role, catalyzes the conversion of 1-deoxypentalenic acid to 11-beta-hydroxy-1-deoxypentalenic acid in the biosynthesis of pentalenolactone antibiotic. This chain is 1-deoxypentalenic acid 11-beta-hydroxylase (penH), found in Streptomyces exfoliatus (Streptomyces hydrogenans).